The chain runs to 313 residues: Homoserine O-succinyltransferase (313 aa).

Catalysis depends on C142, which acts as the Acyl-thioester intermediate. Residues K163 and S192 each coordinate substrate. The active-site Proton acceptor is H235. E237 is an active-site residue. Residue R249 participates in substrate binding.

This sequence belongs to the MetA family.

It is found in the cytoplasm. The enzyme catalyses L-homoserine + succinyl-CoA = O-succinyl-L-homoserine + CoA. It functions in the pathway amino-acid biosynthesis; L-methionine biosynthesis via de novo pathway; O-succinyl-L-homoserine from L-homoserine: step 1/1. Functionally, transfers a succinyl group from succinyl-CoA to L-homoserine, forming succinyl-L-homoserine. The polypeptide is Homoserine O-succinyltransferase (Shewanella sp. (strain MR-4)).